We begin with the raw amino-acid sequence, 359 residues long: sn-1 acyl-lipid omega-3 desaturase (ferredoxin) (359 aa).

2 helical membrane-spanning segments follow: residues 44-64 (LGYF…AAYL) and 67-87 (WFFY…LFVV). The short motif at 89–93 (HDCGH) is the Histidine box-1 element. The short motif at 125–129 (HRTHH) is the Histidine box-2 element. 3 helical membrane passes run 153 to 173 (AWYE…IYLF), 206 to 226 (LAAF…LFLL), and 228 to 248 (FYVA…FLHH). Positions 291-295 (HHIFS) match the Histidine box-3 motif.

Belongs to the fatty acid desaturase type 2 family. It depends on Fe(2+) as a cofactor.

It localises to the membrane. The enzyme catalyses a 1-[(9Z,12Z)-octadecdienoyl]-2-acyl-glycerolipid + 2 reduced [2Fe-2S]-[ferredoxin] + O2 + 2 H(+) = a 1-[(9Z,12Z,15Z)-octadectrienoyl]-2-acyl-glycerolipid + 2 oxidized [2Fe-2S]-[ferredoxin] + 2 H2O. It carries out the reaction a 1-[(6Z,9Z,12Z)-octadectrienoyl]-2-acyl-glycerolipid + 2 reduced [2Fe-2S]-[ferredoxin] + O2 + 2 H(+) = a 1-[(6Z,9Z,12Z,15Z)-octadectetraenoyl]-2-acyl-glycerolipid + 2 oxidized [2Fe-2S]-[ferredoxin] + 2 H2O. It participates in lipid metabolism; polyunsaturated fatty acid biosynthesis. Its function is as follows. Desaturase involved in fatty acid biosynthesis. Introduces a double bond at carbon 15 of linoleoyl and gamma-linolenoyl groups attached to the sn-1 position of the glycerol moiety of membrane glycerolipids. The sequence is that of sn-1 acyl-lipid omega-3 desaturase (ferredoxin) from Synechocystis sp. (strain ATCC 27184 / PCC 6803 / Kazusa).